The primary structure comprises 212 residues: Ras-related protein Rab-21 (212 aa).

GTP contacts are provided by residues 14–21 (GEGCVGKT), 62–66 (DTAGQ), and 120–123 (NKCD). The segment at 181-212 (TNTTGQTTNRSERIPIVPDSDSGNKQPGCCSN) is disordered. The segment covering 201–212 (DSGNKQPGCCSN) has biased composition (polar residues). 2 S-geranylgeranyl cysteine lipidation sites follow: C209 and C210.

This sequence belongs to the small GTPase superfamily. Rab family. As to quaternary structure, interacts with LIM domain proteins limF and ChLim.

The protein resides in the cell membrane. Involved in the regulation of phagocytosis. The polypeptide is Ras-related protein Rab-21 (rab21) (Dictyostelium discoideum (Social amoeba)).